A 358-amino-acid chain; its full sequence is L-lysine 3-hydroxylase (358 aa).

Fe cation contacts are provided by H178, E180, and H314. R328 serves as a coordination point for 2-oxoglutarate.

Belongs to the clavaminate synthase family. Fe(2+) serves as cofactor.

It carries out the reaction L-lysine + 2-oxoglutarate + O2 = (3S)-3-hydroxy-L-lysine + succinate + CO2. Functionally, alpha-ketoglutarate-dependent dioxygenase that in vitro catalyzes the regio- and stereoselective hydroxylation of L-lysine, leading to (3S)-3-hydroxy-L-lysine. Can also use (5R)-5-hydroxy-L-lysine as substrate, but neither D-lysine nor L-ornithine. In Catenulispora acidiphila (strain DSM 44928 / JCM 14897 / NBRC 102108 / NRRL B-24433 / ID139908), this protein is L-lysine 3-hydroxylase.